The following is a 135-amino-acid chain: Small ribosomal subunit protein uS11 (135 aa).

Residues 1 to 22 are disordered; the sequence is MPPKSRTAAGAKKVRRKEKKNV.

The protein belongs to the universal ribosomal protein uS11 family. In terms of assembly, part of the 30S ribosomal subunit. Interacts with proteins S7 and S18. Binds to IF-3.

Functionally, located on the platform of the 30S subunit, it bridges several disparate RNA helices of the 16S rRNA. Forms part of the Shine-Dalgarno cleft in the 70S ribosome. This is Small ribosomal subunit protein uS11 from Nocardioides sp. (strain ATCC BAA-499 / JS614).